The following is an 846-amino-acid chain: Leucine--tRNA ligase (846 aa).

Positions 42-52 (PYPSGNLHMGH) match the 'HIGH' region motif. A 'KMSKS' region motif is present at residues 586–590 (KMSKS). Lys589 contacts ATP.

This sequence belongs to the class-I aminoacyl-tRNA synthetase family.

The protein localises to the cytoplasm. The enzyme catalyses tRNA(Leu) + L-leucine + ATP = L-leucyl-tRNA(Leu) + AMP + diphosphate. The protein is Leucine--tRNA ligase of Heliobacterium modesticaldum (strain ATCC 51547 / Ice1).